The sequence spans 252 residues: Phosphoglycolate phosphatase (252 aa).

Residue Asp-13 is the Nucleophile of the active site. Mg(2+) contacts are provided by Asp-13, Asp-15, and Asp-192.

Belongs to the HAD-like hydrolase superfamily. CbbY/CbbZ/Gph/YieH family. In terms of assembly, monomer. The cofactor is Mg(2+). Chloride is required as a cofactor.

The catalysed reaction is 2-phosphoglycolate + H2O = glycolate + phosphate. It participates in organic acid metabolism; glycolate biosynthesis; glycolate from 2-phosphoglycolate: step 1/1. Functionally, specifically catalyzes the dephosphorylation of 2-phosphoglycolate. Is involved in the dissimilation of the intracellular 2-phosphoglycolate formed during the DNA repair of 3'-phosphoglycolate ends, a major class of DNA lesions induced by oxidative stress. This chain is Phosphoglycolate phosphatase, found in Salmonella typhi.